Here is a 71-residue protein sequence, read N- to C-terminus: Translation initiation factor IF-1 (71 aa).

Residues Met1 to Arg71 form the S1-like domain.

It belongs to the IF-1 family. As to quaternary structure, component of the 30S ribosomal translation pre-initiation complex which assembles on the 30S ribosome in the order IF-2 and IF-3, IF-1 and N-formylmethionyl-tRNA(fMet); mRNA recruitment can occur at any time during PIC assembly.

The protein resides in the cytoplasm. Its function is as follows. One of the essential components for the initiation of protein synthesis. Stabilizes the binding of IF-2 and IF-3 on the 30S subunit to which N-formylmethionyl-tRNA(fMet) subsequently binds. Helps modulate mRNA selection, yielding the 30S pre-initiation complex (PIC). Upon addition of the 50S ribosomal subunit IF-1, IF-2 and IF-3 are released leaving the mature 70S translation initiation complex. In Leuconostoc mesenteroides subsp. mesenteroides (strain ATCC 8293 / DSM 20343 / BCRC 11652 / CCM 1803 / JCM 6124 / NCDO 523 / NBRC 100496 / NCIMB 8023 / NCTC 12954 / NRRL B-1118 / 37Y), this protein is Translation initiation factor IF-1.